A 309-amino-acid polypeptide reads, in one-letter code: Protein FdhE homolog (309 aa).

It belongs to the FdhE family.

The protein localises to the cytoplasm. Its function is as follows. Necessary for formate dehydrogenase activity. The protein is Protein FdhE homolog of Pasteurella multocida (strain Pm70).